The chain runs to 622 residues: Ferredoxin-fold anticodon-binding domain-containing protein 1 homolog (622 aa).

One can recognise an FDX-ACB domain in the interval 529–622; that stretch reads LYPPCYVHDV…IQRQLHVSPR (94 aa).

In Mus musculus (Mouse), this protein is Ferredoxin-fold anticodon-binding domain-containing protein 1 homolog (Fdxacb1).